Consider the following 516-residue polypeptide: Threonine synthase 2, chloroplastic (516 aa).

A chloroplast-targeting transit peptide spans 1-33; sequence MASFSLPHSATYFPSHSETSLKPHSAASFTVRC. The segment covering 1–37 has biased composition (polar residues); that stretch reads MASFSLPHSATYFPSHSETSLKPHSAASFTVRCTSAS. Positions 1-55 are disordered; that stretch reads MASFSLPHSATYFPSHSETSLKPHSAASFTVRCTSASPAVPPQTPQKPRRSPDEN. S-adenosyl-L-methionine is bound by residues 133 to 135, 156 to 158, Asn163, Leu164, Lys172, and Asn178; these read PYG and SAF. Lys194 is modified (N6-(pyridoxal phosphate)lysine). Pyridoxal 5'-phosphate contacts are provided by residues 326–330 and Thr464; that span reads GNLGN.

This sequence belongs to the threonine synthase family. As to quaternary structure, homodimer. The cofactor is pyridoxal 5'-phosphate.

The protein localises to the plastid. The protein resides in the chloroplast. The catalysed reaction is O-phospho-L-homoserine + H2O = L-threonine + phosphate. It functions in the pathway amino-acid biosynthesis; L-threonine biosynthesis; L-threonine from L-aspartate: step 5/5. With respect to regulation, allosterically activated by S-adenosyl-methionine (SAM). Catalyzes the gamma-elimination of phosphate from L-phosphohomoserine and the beta-addition of water to produce L-threonine. In Arabidopsis thaliana (Mouse-ear cress), this protein is Threonine synthase 2, chloroplastic (TS2).